A 70-amino-acid polypeptide reads, in one-letter code: Protein FlmC homolog (70 aa).

Residues 1 to 21 form a disordered region; it reads MSSPHQDSLLPRFAQGEEGHE.

This is Protein FlmC homolog from Escherichia coli.